An 888-amino-acid polypeptide reads, in one-letter code: Patched domain-containing protein 1 (888 aa).

A helical membrane pass occupies residues 20 to 40; sequence FIASHPVFFASAPVLISILLG. Asparagine 77, asparagine 133, and asparagine 167 each carry an N-linked (GlcNAc...) asparagine glycan. Positions 268–427 constitute an SSD domain; the sequence is SERYLVTSLI…LSFYGSSLVF (160 aa). 2 helical membrane-spanning segments follow: residues 273–293 and 298–318; these read VTSLILVVTMAILCCSMQDCV and WLGLLGLVTISLATLTAAGII. Asparagine 319 and asparagine 326 each carry an N-linked (GlcNAc...) asparagine glycan. 4 consecutive transmembrane segments (helical) span residues 328-348, 373-393, 407-427, and 502-522; these read TFLGVPFVMLGHGLYGTFEML, LSFSLTTAMYLVTFGIGASPF, CIAIFFNYLYVLSFYGSSLVF, and PFVVLFYLIYISFALMGYLQV. 3 N-linked (GlcNAc...) asparagine glycosylation sites follow: asparagine 568, asparagine 599, and asparagine 608. 2 helical membrane-spanning segments follow: residues 707–727 and 738–758; these read ALFLLFFSAFLVADSLINVWI and VIGFMTLWKVELDCISVLCLI. N-linked (GlcNAc...) asparagine glycosylation is present at asparagine 762. Residues 795 to 815 traverse the membrane as a helical segment; the sequence is GVAILQSYLCYIVGLIPLAAV. Asparagine 818 is a glycosylation site (N-linked (GlcNAc...) asparagine). Residues 826 to 846 traverse the membrane as a helical segment; it reads CLFLIAFVTFFHCFAILPVIL.

Belongs to the patched family. In terms of tissue distribution, widely expressed, including in various regions of the brain with highest expression in the gray and white cerebellum, followed by the cerebellar vermis and the pituitary gland.

It localises to the cell membrane. Its subcellular location is the cell projection. The protein resides in the dendritic spine. Required for the development and function of the thalamic reticular nucleus (TRN), a part of the thalamus that is critical for thalamocortical transmission, generation of sleep rhythms, sensorimotor processing and attention. Can bind cholesterol in vitro. In Homo sapiens (Human), this protein is Patched domain-containing protein 1.